The following is a 596-amino-acid chain: DNA primase (596 aa).

Residues 41 to 65 (CPFHHEKTPSFSVSQDKQIYKCFGC) form a CHC2-type zinc finger. The region spanning 255–336 (DTIIIVEGYM…DIKIIKIPDG (82 aa)) is the Toprim domain. Mg(2+)-binding residues include glutamate 261, aspartate 305, and aspartate 307.

Belongs to the DnaG primase family. In terms of assembly, monomer. Interacts with DnaB. Requires Zn(2+) as cofactor. The cofactor is Mg(2+).

The enzyme catalyses ssDNA + n NTP = ssDNA/pppN(pN)n-1 hybrid + (n-1) diphosphate.. In terms of biological role, RNA polymerase that catalyzes the synthesis of short RNA molecules used as primers for DNA polymerase during DNA replication. This chain is DNA primase, found in Clostridium acetobutylicum (strain ATCC 824 / DSM 792 / JCM 1419 / IAM 19013 / LMG 5710 / NBRC 13948 / NRRL B-527 / VKM B-1787 / 2291 / W).